Here is a 675-residue protein sequence, read N- to C-terminus: Methionine--tRNA ligase (675 aa).

Residues 15–25 carry the 'HIGH' region motif; sequence PYANGSIHLGH. Positions 146, 149, 159, and 162 each coordinate Zn(2+). Positions 331-335 match the 'KMSKS' region motif; it reads KMSKS. Lysine 334 contributes to the ATP binding site. The region spanning 574-675 is the tRNA-binding domain; the sequence is DFAKIDLRIA…EGAQPGMKVK (102 aa).

Belongs to the class-I aminoacyl-tRNA synthetase family. MetG type 1 subfamily. Homodimer. Requires Zn(2+) as cofactor.

The protein resides in the cytoplasm. The catalysed reaction is tRNA(Met) + L-methionine + ATP = L-methionyl-tRNA(Met) + AMP + diphosphate. Its function is as follows. Is required not only for elongation of protein synthesis but also for the initiation of all mRNA translation through initiator tRNA(fMet) aminoacylation. The polypeptide is Methionine--tRNA ligase (Pseudoalteromonas atlantica (strain T6c / ATCC BAA-1087)).